A 156-amino-acid chain; its full sequence is Enhancer of split M1 protein (156 aa).

An N-terminal signal peptide occupies residues 1–19 (MMSQTLTLCCLALVACVYG). Kazal-like domains are found at residues 23-81 (STND…AWCS) and 96-156 (KLEV…EEKC). Cystine bridges form between Cys-29–Cys-62, Cys-33–Cys-55, Cys-102–Cys-135, Cys-106–Cys-128, and Cys-114–Cys-156.

In Drosophila melanogaster (Fruit fly), this protein is Enhancer of split M1 protein (Kaz-m1).